The primary structure comprises 68 residues: Large ribosomal subunit protein uL29 (68 aa).

The protein belongs to the universal ribosomal protein uL29 family.

This chain is Large ribosomal subunit protein uL29, found in Nitrobacter hamburgensis (strain DSM 10229 / NCIMB 13809 / X14).